A 349-amino-acid polypeptide reads, in one-letter code: Desmethyl-yatein O-methyltransferase (349 aa).

Positions 193, 216, 236, 237, 249, and 250 each coordinate S-adenosyl-L-homocysteine. Catalysis depends on His254, which acts as the Proton acceptor. Residues Glu282 and Glu314 contribute to the active site.

Belongs to the class I-like SAM-binding methyltransferase superfamily. Cation-independent O-methyltransferase family. COMT subfamily. Homodimer. In terms of tissue distribution, mostly expressed in stems, and, to a lower extent, in leaves.

The catalysed reaction is (-)-5'-demethylyatein + S-adenosyl-L-methionine = (-)-yatein + S-adenosyl-L-homocysteine + H(+). Its pathway is aromatic compound metabolism; phenylpropanoid biosynthesis. Its function is as follows. O-methyltransferase involved in the biosynthesis of etoposide, a chemotherapeutic compound of the topoisomerase inhibitor family. Catalyzes the methylation of (-)-5'-demethylyatein to produce (-)-yatein. This chain is Desmethyl-yatein O-methyltransferase, found in Sinopodophyllum hexandrum (Himalayan may apple).